A 232-amino-acid polypeptide reads, in one-letter code: Ashwin (232 aa).

2 stretches are compositionally biased toward basic and acidic residues: residues 64-97 (DLPK…DGLR) and 116-127 (KKTENGDNDRLR). The segment at 64–232 (DLPKSRWGKM…KRKIQHVTWP (169 aa)) is disordered. The segment covering 130–140 (PQASATSNTFR) has biased composition (polar residues). Phosphoserine is present on Ser-143. The segment covering 144–156 (DSSSSVSPLVLSS) has biased composition (low complexity). Basic and acidic residues predominate over residues 163-179 (KMEHGNNDNKQNHDLTH). Phosphoserine occurs at positions 182, 189, and 193. At Thr-198 the chain carries Phosphothreonine.

Belongs to the ashwin family. Component of the tRNA-splicing ligase complex.

It is found in the nucleus. In Bos taurus (Bovine), this protein is Ashwin.